We begin with the raw amino-acid sequence, 169 residues long: Putative adenylate kinase (169 aa).

Positions 10, 12, 13, 14, and 15 each coordinate ATP. The tract at residues 28-51 (HLNDLVGTEGLYDGVDADRGSKIV) is NMP. Residues 98–108 (DRGDSPEKAAE) form an LID region. Residue R99 participates in ATP binding.

Belongs to the adenylate kinase family. AK6 subfamily. As to quaternary structure, interacts with uS11. Not a structural component of 40S pre-ribosomes, but transiently interacts with them by binding to uS11.

It carries out the reaction AMP + ATP = 2 ADP. It catalyses the reaction ATP + H2O = ADP + phosphate + H(+). Broad-specificity nucleoside monophosphate (NMP) kinase that catalyzes the reversible transfer of the terminal phosphate group between nucleoside triphosphates and monophosphates. Also has ATPase activity. Involved in the late maturation steps of the 30S ribosomal particles, specifically 16S rRNA maturation. While NMP activity is not required for ribosome maturation, ATPase activity is. Associates transiently with small ribosomal subunit protein uS11. ATP hydrolysis breaks the interaction with uS11. May temporarily remove uS11 from the ribosome to enable a conformational change of the ribosomal RNA that is needed for the final maturation step of the small ribosomal subunit. This chain is Putative adenylate kinase, found in Halobacterium salinarum (strain ATCC 29341 / DSM 671 / R1).